The sequence spans 581 residues: Protein alan shepard (581 aa).

Positions 1–10 (MHPRYSPAPP) are enriched in pro residues. The tract at residues 1–73 (MHPRYSPAPP…AVTAAPPTPR (73 aa)) is disordered. The residue at position 5 (Tyr5) is a Phosphotyrosine. Residues 35–54 (ANNSQQLPPQMPRSQNYANG) show a composition bias toward polar residues. Residues 55–68 (SSSSAAAASAVTAA) are compositionally biased toward low complexity. Phosphotyrosine is present on residues Tyr128 and Tyr146. Residues 168–226 (PATTTYGQRVPTAASPSNTNSSSSSNTGSQSGTLSTSLSHTTNTNTNMGPNGTAQNQNQ) show a composition bias toward low complexity. The disordered stretch occupies residues 168 to 234 (PATTTYGQRV…NQQGGGGEQL (67 aa)). RRM domains follow at residues 237–310 (TNLY…MAKQ) and 316–395 (TNLY…FADG). Residues 555 to 581 (MTDSEQASTAASPDEAYTQYPHQAAPK) are disordered.

Its function is as follows. Has a role in the perception of gravity. This Drosophila willistoni (Fruit fly) protein is Protein alan shepard.